We begin with the raw amino-acid sequence, 175 residues long: Protein LAZY 3 (175 aa).

Residues arginine 9–proline 39 are disordered. An IGT motif motif is present at residues threonine 44–threonine 50.

This sequence belongs to the LAZY family. Specifically expressed in roots. Expressed in root tips of young seedlings.

Involved in the regulation of root gravitropism. Functions redundantly with LAZY2 and LAZY4 in the control of root gravitropism. Functions redundantly with LAZY1, LAZY2 and LAZY4 to control plant architecture by coupling gravity sensing to the formation of auxin gradients. The chain is Protein LAZY 3 from Arabidopsis thaliana (Mouse-ear cress).